Consider the following 97-residue polypeptide: Co-chaperonin GroES (97 aa).

This sequence belongs to the GroES chaperonin family. Heptamer of 7 subunits arranged in a ring. Interacts with the chaperonin GroEL.

Its subcellular location is the cytoplasm. Its function is as follows. Together with the chaperonin GroEL, plays an essential role in assisting protein folding. The GroEL-GroES system forms a nano-cage that allows encapsulation of the non-native substrate proteins and provides a physical environment optimized to promote and accelerate protein folding. GroES binds to the apical surface of the GroEL ring, thereby capping the opening of the GroEL channel. The chain is Co-chaperonin GroES from Buchnera aphidicola subsp. Thelaxes suberi.